Reading from the N-terminus, the 171-residue chain is RNA silencing suppressor p19 (171 aa).

Over residues 1 to 15 the composition is skewed to basic and acidic residues; that stretch reads MERAIPGNDTREPAY. The interval 1–32 is disordered; sequence MERAIPGNDTREPAYGERWNGGPGGSTSPFQL.

This sequence belongs to the tombusvirus protein p19 family. In terms of assembly, homodimer.

Its function is as follows. Viral suppressor of RNA silencing which binds specifically to silencing RNAs (siRNAs). Acts as a molecular caliper to specifically select siRNAs based on the length of the duplex region of the RNA. This is RNA silencing suppressor p19 from Capsicum annuum (Capsicum pepper).